A 210-amino-acid chain; its full sequence is Ras-related protein SEC4 (210 aa).

Residue 21-28 (GDSGVGKS) participates in GTP binding. An Effector region motif is present at residues 43-51 (FITTIGIDF). GTP contacts are provided by residues 69–73 (DTAGQ) and 127–130 (NKCD). S-geranylgeranyl cysteine attachment occurs at residues Cys209 and Cys210.

This sequence belongs to the small GTPase superfamily. Rab family.

The protein localises to the cytoplasmic vesicle. The protein resides in the secretory vesicle membrane. It localises to the cell membrane. Involved in exocytosis. Maybe by regulating the binding and fusion of secretory vesicles with the cell surface. The GTP-bound form of SEC4 may interact with an effector, thereby stimulating its activity and leading to exocytotic fusion. SEC4 may be an upstream activator of the 19.5S SEC8/SEC15 particle. SEC4 probably interacts directly with SEC8; it could serve as the attachment site for the SEC8/SEC15 particle. The sequence is that of Ras-related protein SEC4 (SEC4) from Candida albicans (strain SC5314 / ATCC MYA-2876) (Yeast).